Here is a 582-residue protein sequence, read N- to C-terminus: Insulin-like growth factor 2 mRNA-binding protein 3 (582 aa).

2 consecutive RRM domains span residues 2–75 (NKLY…HSVP) and 81–156 (CKLQ…YIPD). Residues 164 to 190 (PAVGGRRGFNPRGPPRQGSPSLGARPK) are disordered. A Phosphoserine modification is found at Ser-182. KH domains lie at 194 to 259 (DVPL…CRNI), 275 to 342 (EIPL…EEEI), 408 to 473 (SETV…QGRI), and 490 to 556 (KLEA…QRKI). Positions 562-582 (QVRRQQQPKPSAAGPPVARRK) are disordered.

This sequence belongs to the RRM IMP/VICKZ family. As to quaternary structure, homodimer and multimer.

The protein resides in the cytoplasm. It localises to the nucleus. Its subcellular location is the P-body. It is found in the stress granule. In terms of biological role, RNA-binding factor that may recruit target transcripts to cytoplasmic protein-RNA complexes (mRNPs). This transcript 'caging' into mRNPs allows mRNA transport and transient storage. It also modulates the rate and location at which target transcripts encounter the translational apparatus and shields them from endonuclease attacks or microRNA-mediated degradation. Preferentially binds to N6-methyladenosine (m6A)-containing mRNAs and increases their stability. Involved in neuronal crest migration. The sequence is that of Insulin-like growth factor 2 mRNA-binding protein 3 (igf2bp3) from Danio rerio (Zebrafish).